Here is a 302-residue protein sequence, read N- to C-terminus: HTH-type transcriptional regulator AlsR (302 aa).

The 58-residue stretch at 1-58 (MELRHLQYFIAVAEELHFGKAARRLNMTQPPLSQQIKQLEEEVGVTLLKRTKRFVELT) folds into the HTH lysR-type domain. The segment at residues 18-37 (FGKAARRLNMTQPPLSQQIK) is a DNA-binding region (H-T-H motif).

This sequence belongs to the LysR transcriptional regulatory family.

Its function is as follows. Regulates the expression of the alsSD operon for acetoin biosynthesis. The sequence is that of HTH-type transcriptional regulator AlsR (alsR) from Bacillus subtilis (strain 168).